The chain runs to 375 residues: Trans-enoyl reductase BOA5 (375 aa).

A compositionally biased stretch (polar residues) spans 1–16; it reads MQAVIQTGPGTLQLTE. Residues 1–21 form a disordered region; the sequence is MQAVIQTGPGTLQLTENVPKP. Position 42 to 45 (42 to 45) interacts with NADP(+); sequence SDWK. A substrate-binding site is contributed by 121-128; it reads VGIVTTGL. A disordered region spans residues 147–168; it reads GSAAPQKTRVGPRGWSGGDALT. Residues 185-188, 208-211, Tyr-226, and 273-274 contribute to the NADP(+) site; these read STST, SPHN, and LD. 294–298 lines the substrate pocket; it reads ALTIF. Residue 363–364 participates in NADP(+) binding; the sequence is VS.

This sequence belongs to the zinc-containing alcohol dehydrogenase family. Monomer.

It functions in the pathway polyketide biosynthesis. In terms of biological role, trans-enoyl reductase; part of the gene cluster A that mediates the biosynthesis of botcinic acid and its botcinin derivatives, acetate-derived polyketides that contribute to virulence when combined with the sesquiterpene botrydial. Botcinic acid and its derivatives have been shown to induce chlorosis and necrosis during host plant infection, but also have antifungal activities. Two polyketide synthases, BOA6 and BOA9, are involved in the biosynthesis of botcinins. BOA6 mediates the formation of the per-methylated tetraketide core by condensation of four units of malonyl-CoA with one unit of acetyl-CoA, which would be methylated in activated methylene groups to yield a bicyclic acid intermediate that could then either be converted to botrylactone derivatives or lose the starter acetate unit through a retro-Claisen type C-C bond cleavage to yield botcinin derivatives. The second polyketide synthase, BOA9, is probably required for the biosynthesis of the tetraketide side chain of botcinins. The methyltransferase (MT) domain within BOA6 is probably responsible for the incorporation of four methyl groups. The trans-enoyl reductase BOA5 might take over the enoyl reductase function of BOA6 that misses an ER domain. The monooxygenases BOA2, BOA3 and BOA4 might be involved in further hydroxylations at C4, C5 and C8, whereas BOA7, close to BOA9, could potentially be involved in the hydroxylation at C4 in the side chain of botcinins. This Botryotinia fuckeliana (strain B05.10) (Noble rot fungus) protein is Trans-enoyl reductase BOA5.